The following is a 366-amino-acid chain: Ribosomal RNA large subunit methyltransferase M (366 aa).

S-adenosyl-L-methionine contacts are provided by residues S188, C221 to G224, D240, D260, and D277. K306 acts as the Proton acceptor in catalysis.

The protein belongs to the class I-like SAM-binding methyltransferase superfamily. RNA methyltransferase RlmE family. RlmM subfamily. Monomer.

The protein localises to the cytoplasm. It carries out the reaction cytidine(2498) in 23S rRNA + S-adenosyl-L-methionine = 2'-O-methylcytidine(2498) in 23S rRNA + S-adenosyl-L-homocysteine + H(+). Catalyzes the 2'-O-methylation at nucleotide C2498 in 23S rRNA. The polypeptide is Ribosomal RNA large subunit methyltransferase M (Pectobacterium atrosepticum (strain SCRI 1043 / ATCC BAA-672) (Erwinia carotovora subsp. atroseptica)).